Reading from the N-terminus, the 149-residue chain is 3-dehydroquinate dehydratase (149 aa).

Catalysis depends on Tyr22, which acts as the Proton acceptor. 3 residues coordinate substrate: Asn74, His80, and Asp87. The active-site Proton donor is the His100. Substrate is bound by residues 101 to 102 (MS) and Arg111.

Belongs to the type-II 3-dehydroquinase family. Homododecamer.

It carries out the reaction 3-dehydroquinate = 3-dehydroshikimate + H2O. It functions in the pathway metabolic intermediate biosynthesis; chorismate biosynthesis; chorismate from D-erythrose 4-phosphate and phosphoenolpyruvate: step 3/7. Catalyzes a trans-dehydration via an enolate intermediate. The polypeptide is 3-dehydroquinate dehydratase (Leptothrix cholodnii (strain ATCC 51168 / LMG 8142 / SP-6) (Leptothrix discophora (strain SP-6))).